A 72-amino-acid chain; its full sequence is Neuropeptide SIFamide (72 aa).

The N-terminal stretch at 1–26 is a signal peptide; that stretch reads MALRFTLTLLLVTILVAAILLGSSEA. N-linked (GlcNAc...) asparagine glycosylation occurs at N34. F38 is subject to Phenylalanine amide. A propeptide spanning residues 42 to 72 is cleaved from the precursor; it reads NSLDYDSAKMSAVCEVAMEACPMWFPQNDSK.

This sequence belongs to the FARP (FMRFamide related peptide) family. Strongly expressed in two pairs of neurons in the pars intercerebralis (at protein level).

The protein localises to the secreted. Functionally, ligand for the neuropeptide SIFamide receptor. Modulates sexual behavior by negatively regulating female receptivity to male courtship and by playing a role in male sex discrimination. Also involved in promoting sleep. This is Neuropeptide SIFamide from Drosophila melanogaster (Fruit fly).